A 357-amino-acid polypeptide reads, in one-letter code: MAGGGQGRVAVIGASGYGGLQTIRLLQDHPSLTVTFLGGERSAGRRWSSICSFLPLPEDPVVQSADAERIAAAADYAVLSLPNGLACQLAPELLQRGVRVVDLSADFRYRSLEQWSQVYAQEANRLSREDSELCQQAVYGLPEWHGPAIAEARLVAAPGCFPTASLLPLLPFLKQGLIDTDGIVIDAKTGTSGGGRVPKEAMLLAEASESIAPYGVIGHRHTSEIEQMAREVAGQDVRLQFTPHLVPMVRGLLSTVYARLRDPGLTAEDCTTVLEAVYRHHPCVSVLPVGTYPATKWARHTNRALVSVQVDTRTGQMILMSAIDNLIKGQAGQGVQCLNLMHGLPPETGLPLQSFYP.

Cys160 is a catalytic residue.

This sequence belongs to the NAGSA dehydrogenase family. Type 1 subfamily.

The protein localises to the cytoplasm. The enzyme catalyses N-acetyl-L-glutamate 5-semialdehyde + phosphate + NADP(+) = N-acetyl-L-glutamyl 5-phosphate + NADPH + H(+). Its pathway is amino-acid biosynthesis; L-arginine biosynthesis; N(2)-acetyl-L-ornithine from L-glutamate: step 3/4. Catalyzes the NADPH-dependent reduction of N-acetyl-5-glutamyl phosphate to yield N-acetyl-L-glutamate 5-semialdehyde. This chain is N-acetyl-gamma-glutamyl-phosphate reductase, found in Parasynechococcus marenigrum (strain WH8102).